The primary structure comprises 819 residues: MGNLEKLTPMMKQYMGIKEKYKDAILLFRLGDFYEAFFEDAEIISKVLNIVLTKRQNAPMAGIPYHALDNYLKKLVESGYKVAICEQMEDASQAKGIVKREVTRVITPGTIIEDELLSNDNNYLMAVIFDEKYVSAFIDVSTGELFLKSFDTFLEFVDFVKISSISQVICSKELFDKLKEEIPHLFVEELDEWYFQGYEEKIKETYGLFSIEHLEITELEKKVLGALFKYLEYTLMENKPPQKPKRLEGSKYMILDSKTVENLSLIPGEKGKNLFDILNKTKTSMGARLLKKWILQPLKEKKEILERQKLVEAFYNDHLLLNEVREYLSGVYDLERILTRLGYGKVSPKDLVSLKRSLYLVPSIKDALRTNENLVSFAQSLNEFNEVVGILEKALYDEPSNAPGDGNVIKGGYSVELDDYRNLLFHSEEKLKEFQESEREKTGIQKLRVGFNQVFGYYIEVPKGQVKNVPDYYIRKQTLVNSERYITQELKEFEEKIMSAREKVELIEKSLFEELKQKLSEYIDGLRNLAQKLSELDAISNLAMVARLYGYTKPKFTGGEFYVKNARHAVVERYVSDFVANDIYMDDRRRMYIVTGPNMSGKSTYIRQVGLIAVMAQIGSFVPADDAEIPIFDRVFTRMGARDDISTGKSTFLIEMSEVALILEKATKKSLVLLDEVGRGTSTFDGISIAWAMSEYIYNEIGCETMFATHFTELTELSDVYEGIKNLTIEVRETNNGVVFLHKVVEGIADRSYGIEVAQIAGVPDGVVERAKEILDIISQKSELEKKVRVLKEGQLKKIKSKKKIPEGQLSLFEVGDIE.

Residue Gly596–Ser603 participates in ATP binding.

It belongs to the DNA mismatch repair MutS family.

Its function is as follows. This protein is involved in the repair of mismatches in DNA. It is possible that it carries out the mismatch recognition step. This protein has a weak ATPase activity. The polypeptide is DNA mismatch repair protein MutS (Thermosipho melanesiensis (strain DSM 12029 / CIP 104789 / BI429)).